A 142-amino-acid polypeptide reads, in one-letter code: Heat shock protein HSP.16.4 (142 aa).

A sHSP domain is found at 27 to 142 (NLFNDLKSNL…KEIKTSIPIE (116 aa)).

The protein belongs to the small heat shock protein (HSP20) family.

The protein resides in the cytoplasm. The sequence is that of Heat shock protein HSP.16.4 from Streptococcus thermophilus.